Here is a 162-residue protein sequence, read N- to C-terminus: uncharacterized protein (162 aa).

In terms of domain architecture, HTH asnC-type spans 6 to 78 (LDDLDRNILR…ALIVLEVGKP (73 aa)). Positions 25 to 44 (ISELSEQLKKPESTIHFRIK) form a DNA-binding region, H-T-H motif.

This is an uncharacterized protein from Pyrococcus furiosus (strain ATCC 43587 / DSM 3638 / JCM 8422 / Vc1).